Consider the following 121-residue polypeptide: Small ribosomal subunit protein uS10 (121 aa).

The disordered stretch occupies residues 1 to 20; that stretch reads MTEQKAKSSKTSSEEAKKQK.

This sequence belongs to the universal ribosomal protein uS10 family. In terms of assembly, part of the 30S ribosomal subunit.

Involved in the binding of tRNA to the ribosomes. The chain is Small ribosomal subunit protein uS10 from Mycoplasmoides gallisepticum (strain R(low / passage 15 / clone 2)) (Mycoplasma gallisepticum).